The following is a 161-amino-acid chain: Calcium-binding protein CML24 (161 aa).

EF-hand domains lie at 13-48, 49-84, 90-125, and 126-161; these read GSMD…LSPT, ASPE…GIGG, NDVS…LGEK, and CSVQ…GGGA. The Ca(2+) site is built by Asp-26, Asn-28, Asp-30, Lys-32, Glu-37, Asp-62, Asp-64, Asn-66, Glu-73, Asp-103, Asp-105, Asn-107, Arg-109, Glu-114, Asp-139, Asp-141, Asp-143, Cys-145, and Glu-150.

As to expression, expressed in seed coat, seedling radical, cotyledons, hypocotyl, shoot apex and elongating root. Expressed in the vasculature of cotyledons, leaves and roots. Highly expressed in guard cells, trichomes and hydathodes. Expressed in inflorescence stem branch points, silique abscission zone, young and mature styles and stigmatic papillae, mature anthers and developing seed.

Calcium-binding protein that may positively regulate abscisic acid (ABA) inhibition of germination and seedling development. May be required for photoperiod-induced flowering and function in ion homeostasis. The protein is Calcium-binding protein CML24 (CML24) of Arabidopsis thaliana (Mouse-ear cress).